Here is a 215-residue protein sequence, read N- to C-terminus: MINLALVIFLCTLLNQIVSWVGKSVLQEIAFTAYSWVFLSGTAAKQRKLRKQVLEDKAELGRTSSQDEFAKWAKLRRKLDKGLADLEKTNNTLSSSRSSFSKKFSTLLWLMTTGAQFLLSWWFRKQPIFWLPEGWVPYPVAWLLSFPSAPIGSVSSGAWGAICRRVLSTLQEIIQSVLAPSPAATGPVPTGPSSAKNDQPEAKIEALALEHEKLD.

The Lumenal segment spans residues 1-4 (MINL). The helical transmembrane segment at 5–24 (ALVIFLCTLLNQIVSWVGKS) threads the bilayer. Over 25 to 108 (VLQEIAFTAY…SFSKKFSTLL (84 aa)) the chain is Cytoplasmic. Residues 73–94 (AKLRRKLDKGLADLEKTNNTLS) adopt a coiled-coil conformation. Residues 109–129 (WLMTTGAQFLLSWWFRKQPIF) traverse the membrane as a helical segment. At 130–153 (WLPEGWVPYPVAWLLSFPSAPIGS) the chain is on the lumenal side. A helical membrane pass occupies residues 154–170 (VSSGAWGAICRRVLSTL). The Cytoplasmic segment spans residues 171-215 (QEIIQSVLAPSPAATGPVPTGPSSAKNDQPEAKIEALALEHEKLD). Residues 181–202 (SPAATGPVPTGPSSAKNDQPEA) form a disordered region.

Belongs to the WRB/GET1 family. As to quaternary structure, interacts with GET3.

Its subcellular location is the endoplasmic reticulum membrane. Required for the post-translational delivery of tail-anchored (TA) proteins to the endoplasmic reticulum. Acts as a membrane receptor for soluble GET3, which recognizes and selectively binds the transmembrane domain of TA proteins in the cytosol. The protein is Protein GET1 of Cryptococcus neoformans var. neoformans serotype D (strain B-3501A) (Filobasidiella neoformans).